The chain runs to 207 residues: Alpha-1-acid glycoprotein 1 (207 aa).

The first 18 residues, M1–A18, serve as a signal peptide directing secretion. Q19 is subject to Pyrrolidone carboxylic acid. N25, N34, N76, N94, and N104 each carry an N-linked (GlcNAc...) asparagine glycan. Cysteines 91 and 184 form a disulfide.

This sequence belongs to the calycin superfamily. Lipocalin family.

It is found in the secreted. Functionally, functions as a transport protein in the blood stream. Binds various ligands in the interior of its beta-barrel domain. Appears to function in modulating the activity of the immune system during the acute-phase reaction. This chain is Alpha-1-acid glycoprotein 1 (Orm1), found in Mus musculus (Mouse).